The primary structure comprises 413 residues: Putative competence-damage inducible protein (413 aa).

The protein belongs to the CinA family.

In Acetivibrio thermocellus (strain ATCC 27405 / DSM 1237 / JCM 9322 / NBRC 103400 / NCIMB 10682 / NRRL B-4536 / VPI 7372) (Clostridium thermocellum), this protein is Putative competence-damage inducible protein.